A 105-amino-acid chain; its full sequence is Probable non-functional immunoglobulin lambda variable 5-48 (105 aa).

A signal peptide spans 1-19 (MAWTPLLLLFLSHCTGSLS). Positions 20–44 (QAVLTQPTSLSASPGASARLTCTLR) are framework-1. In terms of domain architecture, Ig-like spans 20–105 (QAVLTQPTSL…NAGILFISGL (86 aa)). Positions 45-53 (SGISVGSYR) are complementarity-determining-1. Residues 54 to 70 (IYWYQQKPGSPPRYLLN) are framework-2. Residues 71-77 (YYSDSDK) form a complementarity-determining-2 region. The framework-3 stretch occupies residues 78–105 (HQGSGVPSRFSGSKDASTNAGILFISGL).

As to quaternary structure, immunoglobulins are composed of two identical heavy chains and two identical light chains; disulfide-linked.

It is found in the secreted. The protein resides in the cell membrane. Functionally, probable non-functional open reading frame (ORF) of V region of the variable domain of immunoglobulin light chains. Non-functional ORF generally cannot participate in the synthesis of a productive immunoglobulin chain due to altered V-(D)-J or switch recombination and/or splicing site (at mRNA level) and/or conserved amino acid change (protein level). Immunoglobulins, also known as antibodies, are membrane-bound or secreted glycoproteins produced by B lymphocytes. In the recognition phase of humoral immunity, the membrane-bound immunoglobulins serve as receptors which, upon binding of a specific antigen, trigger the clonal expansion and differentiation of B lymphocytes into immunoglobulins-secreting plasma cells. Secreted immunoglobulins mediate the effector phase of humoral immunity, which results in the elimination of bound antigens. The antigen binding site is formed by the variable domain of one heavy chain, together with that of its associated light chain. Thus, each immunoglobulin has two antigen binding sites with remarkable affinity for a particular antigen. The variable domains are assembled by a process called V-(D)-J rearrangement and can then be subjected to somatic hypermutations which, after exposure to antigen and selection, allow affinity maturation for a particular antigen. This chain is Probable non-functional immunoglobulin lambda variable 5-48, found in Homo sapiens (Human).